Here is a 231-residue protein sequence, read N- to C-terminus: Probable pyridoxamine 5'-phosphate oxidase (231 aa).

Residue glutamine 20 to lysine 23 coordinates pyridoxal 5'-phosphate. Arginine 74–leucine 77 is a binding site for FMN. Lysine 79 is a pyridoxal 5'-phosphate binding site. FMN is bound by residues phenylalanine 89 to threonine 90, lysine 96 to lysine 97, and glutamine 119. The pyridoxal 5'-phosphate site is built by tyrosine 137, arginine 141, and serine 145. Residues glutamine 154–serine 155 and tryptophan 202 each bind FMN. Position 208–210 (arginine 208–histidine 210) interacts with pyridoxal 5'-phosphate. Residue arginine 212 participates in FMN binding.

It belongs to the pyridoxamine 5'-phosphate oxidase family. In terms of assembly, homodimer. FMN is required as a cofactor.

It catalyses the reaction pyridoxamine 5'-phosphate + O2 + H2O = pyridoxal 5'-phosphate + H2O2 + NH4(+). The catalysed reaction is pyridoxine 5'-phosphate + O2 = pyridoxal 5'-phosphate + H2O2. The protein operates within cofactor metabolism; pyridoxal 5'-phosphate salvage; pyridoxal 5'-phosphate from pyridoxamine 5'-phosphate: step 1/1. Its pathway is cofactor metabolism; pyridoxal 5'-phosphate salvage; pyridoxal 5'-phosphate from pyridoxine 5'-phosphate: step 1/1. Its function is as follows. Catalyzes the oxidation of either pyridoxine 5'-phosphate (PNP) or pyridoxamine 5'-phosphate (PMP) into pyridoxal 5'-phosphate (PLP). The chain is Probable pyridoxamine 5'-phosphate oxidase from Schizosaccharomyces pombe (strain 972 / ATCC 24843) (Fission yeast).